The chain runs to 156 residues: 1-methylthio-D-xylulose 5-phosphate methylsulfurylase (156 aa).

Residues Y55–M122 enclose the Cupin type-2 domain. Mn(2+) is bound by residues E67, H69, H73, and H107. C121 is a catalytic residue.

The catalysed reaction is S-methyl-1-thio-D-xylulose 5-phosphate + glutathione = S-(methylsulfanyl)glutathione + 1-deoxy-D-xylulose 5-phosphate. It carries out the reaction S-(methylsulfanyl)glutathione + AH2 = methanethiol + glutathione + A. It participates in amino-acid biosynthesis; L-methionine biosynthesis via salvage pathway. It functions in the pathway metabolic intermediate biosynthesis; 1-deoxy-D-xylulose 5-phosphate biosynthesis. In terms of biological role, catalyzes the formation of S-(methylsulfanyl)glutathione and 1-deoxy-D-xylulose 5-phosphate (DXP) from 1-methylthioxylulose 5-phosphate (MTXu-5P). The S-(methylsulfanyl)glutathione is reductively cleaved to relase methanethiol in a second reaction. Involved in the MTA-isoprenoid shunt of the methionine salvage pathway. The protein is 1-methylthio-D-xylulose 5-phosphate methylsulfurylase of Rhodospirillum rubrum (strain ATCC 11170 / ATH 1.1.1 / DSM 467 / LMG 4362 / NCIMB 8255 / S1).